Consider the following 263-residue polypeptide: Endonuclease 8 (263 aa).

Pro2 functions as the Schiff-base intermediate with DNA in the catalytic mechanism. The active-site Proton donor is the Glu3. Catalysis depends on Lys53, which acts as the Proton donor; for beta-elimination activity. The DNA site is built by Gln70, Arg125, and Asn169. The FPG-type zinc finger occupies 229–263 (KVFHREGESCERCGGTIERTMLSSRPFYWCPHCQS). Arg253 (proton donor; for delta-elimination activity) is an active-site residue.

Belongs to the FPG family. Zn(2+) is required as a cofactor.

The enzyme catalyses 2'-deoxyribonucleotide-(2'-deoxyribose 5'-phosphate)-2'-deoxyribonucleotide-DNA = a 3'-end 2'-deoxyribonucleotide-(2,3-dehydro-2,3-deoxyribose 5'-phosphate)-DNA + a 5'-end 5'-phospho-2'-deoxyribonucleoside-DNA + H(+). In terms of biological role, involved in base excision repair of DNA damaged by oxidation or by mutagenic agents. Acts as a DNA glycosylase that recognizes and removes damaged bases. Has a preference for oxidized pyrimidines, such as thymine glycol, 5,6-dihydrouracil and 5,6-dihydrothymine. Has AP (apurinic/apyrimidinic) lyase activity and introduces nicks in the DNA strand. Cleaves the DNA backbone by beta-delta elimination to generate a single-strand break at the site of the removed base with both 3'- and 5'-phosphates. In Pectobacterium atrosepticum (strain SCRI 1043 / ATCC BAA-672) (Erwinia carotovora subsp. atroseptica), this protein is Endonuclease 8.